A 122-amino-acid polypeptide reads, in one-letter code: HetP-like commitment protein Alr3234 (122 aa).

This sequence belongs to the HetP family. As to quaternary structure, in bacterial two-hybrid assays interacts robustly with itself, Asl1930, Alr2902 and HetR and weakly with HetP.

Its function is as follows. Delays heterocyst differentiation and commitment when nitrogen is limiting. Interplay between the 4 HetP paralogs controls the timing of commitment to heterocyst formation and its duration. Epistatic analysis show that the 3 paralogs act upstream of hetP to delay commitment (asl1930, alr3234) or inhibit development (alr2902). Asl1930 and Alr3234 must also attenuate the activity of Alr2902. Ectopic expression does not complement a hetP deletion. The protein is HetP-like commitment protein Alr3234 of Nostoc sp. (strain PCC 7120 / SAG 25.82 / UTEX 2576).